A 286-amino-acid chain; its full sequence is Zinc finger protein ZAT5 (286 aa).

Disordered regions lie at residues 1–28 (MMMG…RSSS), 40–60 (STSS…EYNS), and 131–171 (GGHR…FKVS). Residues 115 to 137 (YECKTCNRTFSSFQALGGHRASH) form a C2H2-type 1 zinc finger. Residues 154-171 (QPKSSASEEGQNSHFKVS) are compositionally biased toward polar residues. The segment at 190–212 (HECSICGSEFTSGQALGGHMRRH) adopts a C2H2-type 2 zinc-finger fold.

As to expression, expressed in flowers and siliques.

Its subcellular location is the nucleus. Its function is as follows. Probable transcription factor that may be involved in stress responses. This Arabidopsis thaliana (Mouse-ear cress) protein is Zinc finger protein ZAT5 (ZAT5).